The sequence spans 407 residues: Substance-P receptor (407 aa).

Residues 1 to 31 (MDNVLPMDSDLFPNISTNTSESNQFVQPTWQ) are Extracellular-facing. N14 and N18 each carry an N-linked (GlcNAc...) asparagine glycan. The helical transmembrane segment at 32–54 (IVLWAAAYTVIVVTSVVGNVVVI) threads the bilayer. Residues 55-64 (WIILAHKRMR) are Cytoplasmic-facing. A helical transmembrane segment spans residues 65–86 (TVTNYFLVNLAFAEACMAAFNT). Residues 87–106 (VVNFTYAVHNVWYYGLFYCK) lie on the Extracellular side of the membrane. C105 and C180 form a disulfide bridge. A helical membrane pass occupies residues 107-128 (FHNFFPIAALFASIYSMTAVAF). Residues 129 to 148 (DRYMAIIHPLQPRLSATATK) lie on the Cytoplasmic side of the membrane. Residues 149–169 (VVIFVIWVLALLLAFPQGYYS) traverse the membrane as a helical segment. Over 170–194 (TTETMPSRVVCMIEWPEHPNRTYEK) the chain is Extracellular. Residues 195 to 219 (AYHICVTVLIYFLPLLVIGYAYTVV) traverse the membrane as a helical segment. Residues 220–248 (GITLWASEIPGDSSDRYHEQVSAKRKVVK) are Cytoplasmic-facing. The chain crosses the membrane as a helical span at residues 249–270 (MMIVVVCTFAICWLPFHVFFLL). Residues 271–283 (PYINPDLYLKKFI) are Extracellular-facing. Residues 284-308 (QQVYLASMWLAMSSTMYNPIIYCCL) form a helical membrane-spanning segment. The Cytoplasmic segment spans residues 309-407 (NDRFRLGFKH…SSSFYSNMLA (99 aa)). C322 is lipidated: S-palmitoyl cysteine. The tract at residues 362 to 407 (VGAHEEEPEEGPKATPSSLDLTSNGSSRSNSKTMTESSSFYSNMLA) is disordered. Residues 376 to 407 (TPSSLDLTSNGSSRSNSKTMTESSSFYSNMLA) show a composition bias toward polar residues.

The protein belongs to the G-protein coupled receptor 1 family. In terms of assembly, interacts with ARRB1.

It is found in the cell membrane. Functionally, this is a receptor for the tachykinin neuropeptide substance P. It is probably associated with G proteins that activate a phosphatidylinositol-calcium second messenger system. The rank order of affinity of this receptor to tachykinins is: substance P &gt; substance K &gt; neuromedin-K. The chain is Substance-P receptor (Tacr1) from Rattus norvegicus (Rat).